A 568-amino-acid chain; its full sequence is Urease subunit alpha (568 aa).

The 437-residue stretch at 132–568 folds into the Urease domain; that stretch reads GAIDTHVHYI…LPLAQLYNLF (437 aa). The Ni(2+) site is built by histidine 137, histidine 139, and lysine 219. N6-carboxylysine is present on lysine 219. A substrate-binding site is contributed by histidine 221. Ni(2+) contacts are provided by histidine 248 and histidine 274. Catalysis depends on histidine 322, which acts as the Proton donor. Aspartate 362 is a binding site for Ni(2+).

This sequence belongs to the metallo-dependent hydrolases superfamily. Urease alpha subunit family. Heterotrimer of UreA (gamma), UreB (beta) and UreC (alpha) subunits. Three heterotrimers associate to form the active enzyme. The cofactor is Ni cation. Carboxylation allows a single lysine to coordinate two nickel ions.

The protein localises to the cytoplasm. The enzyme catalyses urea + 2 H2O + H(+) = hydrogencarbonate + 2 NH4(+). Its pathway is nitrogen metabolism; urea degradation; CO(2) and NH(3) from urea (urease route): step 1/1. The protein is Urease subunit alpha of Azobacteroides pseudotrichonymphae genomovar. CFP2.